Consider the following 471-residue polypeptide: Ribulose bisphosphate carboxylase large chain (471 aa).

The substrate site is built by N115 and T165. The active-site Proton acceptor is the K167. K169 serves as a coordination point for substrate. Residues K193, D195, and E196 each coordinate Mg(2+). Residue K193 is modified to N6-carboxylysine. H286 functions as the Proton acceptor in the catalytic mechanism. Substrate-binding residues include R287, H319, and S371.

This sequence belongs to the RuBisCO large chain family. Type I subfamily. Heterohexadecamer of 8 large chains and 8 small chains. The cofactor is Mg(2+).

The enzyme catalyses 2 (2R)-3-phosphoglycerate + 2 H(+) = D-ribulose 1,5-bisphosphate + CO2 + H2O. It catalyses the reaction D-ribulose 1,5-bisphosphate + O2 = 2-phosphoglycolate + (2R)-3-phosphoglycerate + 2 H(+). RuBisCO catalyzes two reactions: the carboxylation of D-ribulose 1,5-bisphosphate, the primary event in carbon dioxide fixation, as well as the oxidative fragmentation of the pentose substrate. Both reactions occur simultaneously and in competition at the same active site. In Alvinoconcha hessleri symbiotic bacterium, this protein is Ribulose bisphosphate carboxylase large chain.